Reading from the N-terminus, the 712-residue chain is Anaerobic ribonucleoside-triphosphate reductase (712 aa).

The ATP-cone domain occupies 3–92; it reads PHVMKRDGCK…EYRHDRDIQR (90 aa). A Glycine radical domain is found at 583-708; it reads KKVNPYDKID…VKRRVKHLGN (126 aa). Positions 644, 647, 662, and 665 each coordinate Zn(2+). Gly-681 is subject to Glycine radical.

This sequence belongs to the anaerobic ribonucleoside-triphosphate reductase family. As to quaternary structure, forms a tetramer composed of two NrdD and two NrdG subunits.

It carries out the reaction a ribonucleoside 5'-triphosphate + formate + H(+) = a 2'-deoxyribonucleoside 5'-triphosphate + CO2 + H2O. With respect to regulation, activated under anaerobic conditions by NrdG, a tightly associated activase. Activation involves the formation of a glycyl radical at Gly-681. Functionally, catalyzes the conversion of ribonucleotides into deoxyribonucleotides, which are required for DNA synthesis and repair. The sequence is that of Anaerobic ribonucleoside-triphosphate reductase (nrdD) from Salmonella typhimurium (strain LT2 / SGSC1412 / ATCC 700720).